The sequence spans 280 residues: Nucleotide-binding protein CV_3336 (280 aa).

8 to 15 (GLSGSGKS) provides a ligand contact to ATP. 57–60 (DTRS) lines the GTP pocket.

The protein belongs to the RapZ-like family.

Functionally, displays ATPase and GTPase activities. The chain is Nucleotide-binding protein CV_3336 from Chromobacterium violaceum (strain ATCC 12472 / DSM 30191 / JCM 1249 / CCUG 213 / NBRC 12614 / NCIMB 9131 / NCTC 9757 / MK).